The following is a 225-amino-acid chain: Leucyl/phenylalanyl-tRNA--protein transferase (225 aa).

Belongs to the L/F-transferase family.

The protein resides in the cytoplasm. The catalysed reaction is N-terminal L-lysyl-[protein] + L-leucyl-tRNA(Leu) = N-terminal L-leucyl-L-lysyl-[protein] + tRNA(Leu) + H(+). It carries out the reaction N-terminal L-arginyl-[protein] + L-leucyl-tRNA(Leu) = N-terminal L-leucyl-L-arginyl-[protein] + tRNA(Leu) + H(+). It catalyses the reaction L-phenylalanyl-tRNA(Phe) + an N-terminal L-alpha-aminoacyl-[protein] = an N-terminal L-phenylalanyl-L-alpha-aminoacyl-[protein] + tRNA(Phe). Functions in the N-end rule pathway of protein degradation where it conjugates Leu, Phe and, less efficiently, Met from aminoacyl-tRNAs to the N-termini of proteins containing an N-terminal arginine or lysine. The chain is Leucyl/phenylalanyl-tRNA--protein transferase from Nitrobacter hamburgensis (strain DSM 10229 / NCIMB 13809 / X14).